Reading from the N-terminus, the 474-residue chain is PRAME family member 1 (474 aa).

One copy of the LRR 1; degenerate repeat lies at R97–C124. An LRR 2; degenerate repeat occupies H179–Y203. The LRR 3; degenerate repeat unit spans residues L204–E230. The LRR 4; degenerate repeat unit spans residues M231–R265. 5 LRR repeats span residues L266–L291, Q292–K323, H324–A342, A348–R375, and C376–H400.

The protein belongs to the PRAME family.

The polypeptide is PRAME family member 1 (Homo sapiens (Human)).